A 307-amino-acid polypeptide reads, in one-letter code: Elongation factor Ts (307 aa).

The involved in Mg(2+) ion dislocation from EF-Tu stretch occupies residues Thr-80 to Val-83.

The protein belongs to the EF-Ts family.

It is found in the cytoplasm. In terms of biological role, associates with the EF-Tu.GDP complex and induces the exchange of GDP to GTP. It remains bound to the aminoacyl-tRNA.EF-Tu.GTP complex up to the GTP hydrolysis stage on the ribosome. The sequence is that of Elongation factor Ts from Xanthobacter autotrophicus (strain ATCC BAA-1158 / Py2).